The sequence spans 185 residues: Ribosome-recycling factor (185 aa).

Belongs to the RRF family.

The protein resides in the cytoplasm. Responsible for the release of ribosomes from messenger RNA at the termination of protein biosynthesis. May increase the efficiency of translation by recycling ribosomes from one round of translation to another. The polypeptide is Ribosome-recycling factor (Kocuria rhizophila (strain ATCC 9341 / DSM 348 / NBRC 103217 / DC2201)).